Reading from the N-terminus, the 407-residue chain is Aurora kinase (407 aa).

Disordered regions lie at residues 1–43 and 66–137; these read MTPT…STSS and ERQG…TQSK. 2 stretches are compositionally biased toward low complexity: residues 31–43 and 126–136; these read SASTTSTTASTSS and STTTTMTSTQS. A Protein kinase domain is found at 147-399; that stretch reads FDIGRPLGKG…LEGVIAHAWI (253 aa). ATP is bound by residues lysine 157, lysine 176, and 224–227; that span reads LEYA. Aspartate 272 (proton acceptor) is an active-site residue. Aspartate 290 contributes to the ATP binding site.

Belongs to the protein kinase superfamily. Ser/Thr protein kinase family.

Its subcellular location is the cytoplasm. It localises to the cytoskeleton. It is found in the spindle. The protein localises to the midbody. The protein resides in the microtubule organizing center. Its subcellular location is the centrosome. It localises to the nucleus. It is found in the chromosome. The protein localises to the centromere. It catalyses the reaction L-seryl-[protein] + ATP = O-phospho-L-seryl-[protein] + ADP + H(+). The catalysed reaction is L-threonyl-[protein] + ATP = O-phospho-L-threonyl-[protein] + ADP + H(+). Its activity is regulated as follows. Cdc2 activity is required for activation. Its function is as follows. Serine/threonine protein kinase that contributes to the regulation of cell cycle progression. Involved in meiotic apparatus formation and polar body extrusion. Contributes to Plk1 activation and phosphorylation of histone H3 at 'Ser-10' during meiosis I. Required for accurate progression of early embryonic M phase. Involved in chromosome alignment and cleavage furrow formation during early embryonic cycles. May be involved in mitotic spindle formation and cytokinesis. This chain is Aurora kinase, found in Patiria pectinifera (Starfish).